The primary structure comprises 355 residues: Histidinol-phosphate aminotransferase (355 aa).

N6-(pyridoxal phosphate)lysine is present on K214.

This sequence belongs to the class-II pyridoxal-phosphate-dependent aminotransferase family. Histidinol-phosphate aminotransferase subfamily. As to quaternary structure, homodimer. Pyridoxal 5'-phosphate serves as cofactor.

It catalyses the reaction L-histidinol phosphate + 2-oxoglutarate = 3-(imidazol-4-yl)-2-oxopropyl phosphate + L-glutamate. It participates in amino-acid biosynthesis; L-histidine biosynthesis; L-histidine from 5-phospho-alpha-D-ribose 1-diphosphate: step 7/9. This is Histidinol-phosphate aminotransferase (hisC) from Buchnera aphidicola subsp. Schizaphis graminum (strain Sg).